Consider the following 540-residue polypeptide: Thiamine biosynthetic bifunctional enzyme (540 aa).

Positions Met-1–Glu-238 are thiamine-phosphate synthase. 4-amino-2-methyl-5-(diphosphooxymethyl)pyrimidine-binding positions include Gln-43–Lys-47 and Asn-75. Residues Asp-76 and Asp-95 each coordinate Mg(2+). Ser-114 provides a ligand contact to 4-amino-2-methyl-5-(diphosphooxymethyl)pyrimidine. Thr-143 to Thr-145 is a 2-[(2R,5Z)-2-carboxy-4-methylthiazol-5(2H)-ylidene]ethyl phosphate binding site. Lys-146 serves as a coordination point for 4-amino-2-methyl-5-(diphosphooxymethyl)pyrimidine. 2-[(2R,5Z)-2-carboxy-4-methylthiazol-5(2H)-ylidene]ethyl phosphate is bound by residues Gly-181 and Val-209–Ser-210. The tract at residues Cys-239–Lys-540 is hydroxyethylthiazole kinase. Met-290 contributes to the 5-(2-hydroxyethyl)-4-methylthiazole binding site. Residues Lys-365 and Thr-415 each coordinate ATP. Ala-462 serves as a coordination point for 5-(2-hydroxyethyl)-4-methylthiazole. Residue Cys-465 is the Proton acceptor; for hydroxyethylthiazole kinase activity of the active site.

It in the N-terminal section; belongs to the thiamine-phosphate synthase family. The protein in the C-terminal section; belongs to the Thz kinase family. In terms of assembly, homooctamer. Requires Mg(2+) as cofactor.

It catalyses the reaction 2-[(2R,5Z)-2-carboxy-4-methylthiazol-5(2H)-ylidene]ethyl phosphate + 4-amino-2-methyl-5-(diphosphooxymethyl)pyrimidine + 2 H(+) = thiamine phosphate + CO2 + diphosphate. The enzyme catalyses 2-(2-carboxy-4-methylthiazol-5-yl)ethyl phosphate + 4-amino-2-methyl-5-(diphosphooxymethyl)pyrimidine + 2 H(+) = thiamine phosphate + CO2 + diphosphate. It carries out the reaction 4-methyl-5-(2-phosphooxyethyl)-thiazole + 4-amino-2-methyl-5-(diphosphooxymethyl)pyrimidine + H(+) = thiamine phosphate + diphosphate. The catalysed reaction is 5-(2-hydroxyethyl)-4-methylthiazole + ATP = 4-methyl-5-(2-phosphooxyethyl)-thiazole + ADP + H(+). Its pathway is cofactor biosynthesis; thiamine diphosphate biosynthesis; 4-methyl-5-(2-phosphoethyl)-thiazole from 5-(2-hydroxyethyl)-4-methylthiazole: step 1/1. It functions in the pathway cofactor biosynthesis; thiamine diphosphate biosynthesis; thiamine phosphate from 4-amino-2-methyl-5-diphosphomethylpyrimidine and 4-methyl-5-(2-phosphoethyl)-thiazole: step 1/1. In terms of biological role, essential for thiamine biosynthesis. The kinase activity is involved in the salvage synthesis of TH-P from the thiazole. Its function is as follows. Condenses 4-methyl-5-(beta-hydroxyethyl)thiazole monophosphate (THZ-P) and 2-methyl-4-amino-5-hydroxymethyl pyrimidine pyrophosphate (HMP-PP) to form thiamine monophosphate (TMP). The chain is Thiamine biosynthetic bifunctional enzyme (THI6) from Saccharomyces cerevisiae (strain ATCC 204508 / S288c) (Baker's yeast).